The chain runs to 389 residues: MVSVSEIRKPQRAEGPATILAIGTANPANCVEQSTYPDFYFKITNSEHKTVLKEKFQRMCDKSMIKRRYMYLTEEILKENPSLCEYMAPSLDARQDMVVVEVPRLGKEAAVKAIKEWGQPKSKITHLIFCTTSGVDMPGADYQLTKLLGLRPYVKRYMMYQQGCFAGGTVLRLAKDLAENNKGARVLVVCSEVTAVTFRGPSDTHLDSLVGQALFGDGAAALIVGSDPVPEIEKPIFEMVWTAQTIAPDSEGAIDGHLREQGLTFHLLKDVPGIVSKNIDKALVEAFKPLGISDYNSIFWIAHPGGPAILDQVEQKLGLKPEKMRATREVLSEYGNMSSACVLFILDQMRKKSTQDGLNTTGEGLEWGVLFGFGPGLTIETVVLHSVAI.

The active site involves C164.

This sequence belongs to the thiolase-like superfamily. Chalcone/stilbene synthases family.

It carries out the reaction (E)-4-coumaroyl-CoA + 3 malonyl-CoA + 3 H(+) = 2',4,4',6'-tetrahydroxychalcone + 3 CO2 + 4 CoA. It functions in the pathway secondary metabolite biosynthesis; flavonoid biosynthesis. In terms of biological role, the primary product of this enzyme is 4,2',4',6'-tetrahydroxychalcone (also termed naringenin-chalcone or chalcone) which can under specific conditions spontaneously isomerize into naringenin. The polypeptide is Chalcone synthase 1 (CHS1) (Pisum sativum (Garden pea)).